Reading from the N-terminus, the 122-residue chain is Large ribosomal subunit protein uL14 (122 aa).

It belongs to the universal ribosomal protein uL14 family. Part of the 50S ribosomal subunit. Forms a cluster with proteins L3 and L19. In the 70S ribosome, L14 and L19 interact and together make contacts with the 16S rRNA in bridges B5 and B8.

Functionally, binds to 23S rRNA. Forms part of two intersubunit bridges in the 70S ribosome. This chain is Large ribosomal subunit protein uL14, found in Methylobacillus flagellatus (strain ATCC 51484 / DSM 6875 / VKM B-1610 / KT).